The chain runs to 847 residues: MNKTTEYIDALLLSEREKAALPKTDIRAVHQALDAEHRTYSREDDSPQGSVKARLEHAWPDSLAKGQLIKDDEGRDQLQAMPKATRSSMFPDPWRTNPVGRFWDRLRGRDVTPRYVSRLTKEEQASEQKWRTVGTIRRYILLILTLAQTVVATWYMKTILPYQGWALINPMDMVGQDIWVSFMQLLPYMLQTGILILFAVLFCWVSAGFWTALMGFLQLLIGRDKYSISASTVGDEPLNPEHRTALIMPICNEDVSRVFAGLRATWESVKATGNAAHFDVYILSDSYNPDICVAEQKAWMELIAEVQGEGQIFYRRRRRRMKRKSGNIDDFCRRWGNQYSYMVVLDADSVMSGECLSGLVRLMEANPNAGIIQSSPKASGMDTLYARCQQFATRVYGPLFTAGLHFWQLGESHYWGHNAIIRVKPFIEHCALAPLPGEGSFAGSILSHDFVEAALMRRAGWGVWIAYDLPGSYEELPPNLLDELKRDRRWCHGNLMNFRLFLVKGMHPVHRAVFLTGVMSYLSAPLWFMFLALSTALQVVHALTEPQYFLQPRQLFPVWPQWRPELAIALFASTMVLLFLPKLLSIMLIWCKGTKEYGGFWRVTLSLLLEVLFSVLLAPVRMLFHTVFVVSAFLGWEVVWNSPQRDDDSTPWGEAFMRHGSQLLLGLVWAVGMAWLDLRFLFWLAPIVFSLILSPFVSVISSRSTVGLRTKRWKLFLIPEEYSPPQVLVDTDKYLEMNRRRILDDGFMHAVFNPSLNALATAMATARHRASKVLEIARDRHVEQALNETPEKLNRDRRLVLLSDPVTMARLHYRVWNAPERYSSWVNHYQSLVLNPQALQGRTSSAR.

Residues 1–138 (MNKTTEYIDA…KWRTVGTIRR (138 aa)) lie on the Cytoplasmic side of the membrane. A helical transmembrane segment spans residues 139-156 (YILLILTLAQTVVATWYM). Topologically, residues 157-193 (KTILPYQGWALINPMDMVGQDIWVSFMQLLPYMLQTG) are periplasmic. The chain crosses the membrane as a helical span at residues 194–216 (ILILFAVLFCWVSAGFWTALMGF). The Cytoplasmic portion of the chain corresponds to 217 to 511 (LQLLIGRDKY…LVKGMHPVHR (295 aa)). The helical transmembrane segment at 512-534 (AVFLTGVMSYLSAPLWFMFLALS) threads the bilayer. The Periplasmic segment spans residues 535–567 (TALQVVHALTEPQYFLQPRQLFPVWPQWRPELA). A helical transmembrane segment spans residues 568–590 (IALFASTMVLLFLPKLLSIMLIW). The Cytoplasmic portion of the chain corresponds to 591–602 (CKGTKEYGGFWR). The chain crosses the membrane as a helical span at residues 603–625 (VTLSLLLEVLFSVLLAPVRMLFH). The Periplasmic segment spans residues 626–679 (TVFVVSAFLGWEVVWNSPQRDDDSTPWGEAFMRHGSQLLLGLVWAVGMAWLDLR). The chain crosses the membrane as a helical span at residues 680–702 (FLFWLAPIVFSLILSPFVSVISS). At 703-847 (RSTVGLRTKR…ALQGRTSSAR (145 aa)) the chain is on the cytoplasmic side.

This sequence belongs to the glycosyltransferase 2 family. OpgH subfamily.

The protein localises to the cell inner membrane. It participates in glycan metabolism; osmoregulated periplasmic glucan (OPG) biosynthesis. Functionally, involved in the biosynthesis of osmoregulated periplasmic glucans (OPGs). The chain is Glucans biosynthesis glucosyltransferase H from Salmonella typhimurium (strain LT2 / SGSC1412 / ATCC 700720).